The primary structure comprises 360 residues: 3-dehydroquinate synthase (360 aa).

NAD(+)-binding positions include 72-77 (DGEEYK), 106-110 (GVIGD), 130-131 (TT), Lys143, and Lys152. 3 residues coordinate Zn(2+): Glu185, His248, and His265.

This sequence belongs to the sugar phosphate cyclases superfamily. Dehydroquinate synthase family. It depends on Co(2+) as a cofactor. Requires Zn(2+) as cofactor. The cofactor is NAD(+).

The protein localises to the cytoplasm. The catalysed reaction is 7-phospho-2-dehydro-3-deoxy-D-arabino-heptonate = 3-dehydroquinate + phosphate. Its pathway is metabolic intermediate biosynthesis; chorismate biosynthesis; chorismate from D-erythrose 4-phosphate and phosphoenolpyruvate: step 2/7. In terms of biological role, catalyzes the conversion of 3-deoxy-D-arabino-heptulosonate 7-phosphate (DAHP) to dehydroquinate (DHQ). The protein is 3-dehydroquinate synthase of Geotalea uraniireducens (strain Rf4) (Geobacter uraniireducens).